We begin with the raw amino-acid sequence, 750 residues long: Photosystem I P700 chlorophyll a apoprotein A1 (750 aa).

8 consecutive transmembrane segments (helical) span residues 70-93 (VFSA…FHGA), 156-179 (LYCT…FHYH), 195-219 (LNHH…HVSL), 291-309 (IAHH…GHMY), 346-369 (WHAQ…HHMY), 385-411 (LSLF…IFMV), 433-455 (AIIS…LYIH), and 531-549 (FLVH…LILL). Residues cysteine 573 and cysteine 582 each coordinate [4Fe-4S] cluster. 2 helical membrane-spanning segments follow: residues 589-610 (HVFL…HFSW) and 664-686 (LSAY…MFLF). Chlorophyll a' is bound at residue histidine 675. The chlorophyll a site is built by methionine 683 and tyrosine 691. Tryptophan 692 serves as a coordination point for phylloquinone. A helical membrane pass occupies residues 724 to 744 (AVGVTHYLLGGIATTWAFFLA).

It belongs to the PsaA/PsaB family. As to quaternary structure, the PsaA/B heterodimer binds the P700 chlorophyll special pair and subsequent electron acceptors. PSI consists of a core antenna complex that captures photons, and an electron transfer chain that converts photonic excitation into a charge separation. The eukaryotic PSI reaction center is composed of at least 11 subunits. P700 is a chlorophyll a/chlorophyll a' dimer, A0 is one or more chlorophyll a, A1 is one or both phylloquinones and FX is a shared 4Fe-4S iron-sulfur center. is required as a cofactor.

It is found in the plastid. The protein localises to the chloroplast thylakoid membrane. The catalysed reaction is reduced [plastocyanin] + hnu + oxidized [2Fe-2S]-[ferredoxin] = oxidized [plastocyanin] + reduced [2Fe-2S]-[ferredoxin]. PsaA and PsaB bind P700, the primary electron donor of photosystem I (PSI), as well as the electron acceptors A0, A1 and FX. PSI is a plastocyanin-ferredoxin oxidoreductase, converting photonic excitation into a charge separation, which transfers an electron from the donor P700 chlorophyll pair to the spectroscopically characterized acceptors A0, A1, FX, FA and FB in turn. Oxidized P700 is reduced on the lumenal side of the thylakoid membrane by plastocyanin. This chain is Photosystem I P700 chlorophyll a apoprotein A1, found in Crucihimalaya wallichii (Rock-cress).